Consider the following 108-residue polypeptide: UPF0145 protein gll1048 (108 aa).

This sequence belongs to the UPF0145 family.

The protein is UPF0145 protein gll1048 of Gloeobacter violaceus (strain ATCC 29082 / PCC 7421).